The sequence spans 250 residues: Transmembrane protein 106C (250 aa).

The disordered stretch occupies residues 1-25 (MGSQHSAAARPSSCRRKQEDDRDGL). Residue glycine 2 is the site of N-myristoyl glycine attachment. The span at 16-25 (RKQEDDRDGL) shows a compositional bias: basic and acidic residues. The chain crosses the membrane as a helical span at residues 87–107 (YVLLSILLCLLASGLVVFFLF). Asparagine 173 and asparagine 186 each carry an N-linked (GlcNAc...) asparagine glycan. Residues 197-217 (FSYVYFFCTVPEILVHNIVIF) traverse the membrane as a helical segment.

Belongs to the TMEM106 family. Interacts with TMEM106B.

It is found in the endoplasmic reticulum membrane. It localises to the membrane. The chain is Transmembrane protein 106C (TMEM106C) from Homo sapiens (Human).